The chain runs to 208 residues: UPF0637 protein lp_2332 (208 aa).

It belongs to the UPF0637 family.

In Lactiplantibacillus plantarum (strain ATCC BAA-793 / NCIMB 8826 / WCFS1) (Lactobacillus plantarum), this protein is UPF0637 protein lp_2332.